The following is a 169-amino-acid chain: Ribosome maturation factor RimM (169 aa).

Residues 94–168 (DDEFYHADLI…RIVADPPEGL (75 aa)) enclose the PRC barrel domain.

The protein belongs to the RimM family. Binds ribosomal protein uS19.

It is found in the cytoplasm. In terms of biological role, an accessory protein needed during the final step in the assembly of 30S ribosomal subunit, possibly for assembly of the head region. Essential for efficient processing of 16S rRNA. May be needed both before and after RbfA during the maturation of 16S rRNA. It has affinity for free ribosomal 30S subunits but not for 70S ribosomes. This is Ribosome maturation factor RimM from Cereibacter sphaeroides (strain ATCC 17025 / ATH 2.4.3) (Rhodobacter sphaeroides).